We begin with the raw amino-acid sequence, 1003 residues long: Alpha-1,4 glucan phosphorylase L isozyme, chloroplastic/amyloplastic (1003 aa).

The N-terminal 64 residues, 1–64 (MASMTMRFHP…RRRSAFSVKC (64 aa)), are a transit peptide targeting the chloroplast. Disordered stretches follow at residues 71–91 (KQKV…SSFA) and 526–593 (SSEE…KKLP). Residues 537-553 (GEEEETSKEGGEEEEEK) are compositionally biased toward acidic residues. The span at 569-580 (EVEKAIAEKDGT) shows a compositional bias: basic and acidic residues. The residue at position 849 (Lys849) is an N6-(pyridoxal phosphate)lysine.

This sequence belongs to the glycogen phosphorylase family. Pyridoxal 5'-phosphate serves as cofactor. In terms of tissue distribution, found predominantly in cotyledons and early seed coat.

The protein localises to the plastid. It localises to the chloroplast. It is found in the amyloplast. The catalysed reaction is [(1-&gt;4)-alpha-D-glucosyl](n) + phosphate = [(1-&gt;4)-alpha-D-glucosyl](n-1) + alpha-D-glucose 1-phosphate. In terms of biological role, phosphorylase is an important allosteric enzyme in carbohydrate metabolism. Enzymes from different sources differ in their regulatory mechanisms and in their natural substrates. However, all known phosphorylases share catalytic and structural properties. Functionally, the L isoform exhibits higher affinity for unbranched substrates such as glucan-like amylose and maltodextrin. This is Alpha-1,4 glucan phosphorylase L isozyme, chloroplastic/amyloplastic (PHO1) from Vicia faba (Broad bean).